The following is a 163-amino-acid chain: Shikimate kinase (163 aa).

Position 10–15 (10–15 (GVGKSS)) interacts with ATP. S14 contributes to the Mg(2+) binding site. Substrate is bound by residues D28, R52, and G75. R116 contributes to the ATP binding site. Substrate is bound at residue R134. R151 is a binding site for ATP.

This sequence belongs to the shikimate kinase family. As to quaternary structure, monomer. The cofactor is Mg(2+).

Its subcellular location is the cytoplasm. The enzyme catalyses shikimate + ATP = 3-phosphoshikimate + ADP + H(+). The protein operates within metabolic intermediate biosynthesis; chorismate biosynthesis; chorismate from D-erythrose 4-phosphate and phosphoenolpyruvate: step 5/7. Functionally, catalyzes the specific phosphorylation of the 3-hydroxyl group of shikimic acid using ATP as a cosubstrate. In Streptococcus thermophilus (strain ATCC BAA-491 / LMD-9), this protein is Shikimate kinase.